Consider the following 362-residue polypeptide: 1-aminocyclopropane-1-carboxylate oxidase homolog 10 (362 aa).

The region spanning 211-310 is the Fe2OG dioxygenase domain; that stretch reads KGLFMLCHYY…RISVACFFSS (100 aa). The Fe cation site is built by H235, D237, and H291. R301 lines the 2-oxoglutarate pocket.

It belongs to the iron/ascorbate-dependent oxidoreductase family. Fe(2+) serves as cofactor.

This Arabidopsis thaliana (Mouse-ear cress) protein is 1-aminocyclopropane-1-carboxylate oxidase homolog 10.